The primary structure comprises 429 residues: MKKLNTQSPDFQAGLKALLAFETAQNPETERIVADICADVQKRGDAALIEYTNKFDQTNAKSIDDLILTQADLNAAFERIPNDVQTALQTAARRVESYHQRQKMESWSYTDEDGTLLGQQITPLDRVGIYVPGGKAAYPSSVIMNAMPAHVAGVKEIIMVVPTPKGERNDIVLAAAYVAGVTKVFTVGGAQAVAALAYGTETIPQVDKITGPGNAFVAAAKRRVFGVVGIDMVAGPSEILVIADGTTPADWVAMDLFSQAEHDEIAQAILIGTSQAYLDEVEAAMDRLIETMPRRDIIEASLGNRGAMILAKDLDEACEIANYISPEHLELSVENPQEWAKKIRHAGAIFMGRYTGESLGDYCAGPNHVLPTSRTARFSSPLGTYDFQKRSSLIQVSEQGAQKLGETASVLAHGESLTAHARAAEFRMK.

3 residues coordinate NAD(+): tyrosine 130, glutamine 191, and asparagine 214. 3 residues coordinate substrate: serine 237, glutamine 259, and histidine 262. Zn(2+) contacts are provided by glutamine 259 and histidine 262. Residues glutamate 327 and histidine 328 each act as proton acceptor in the active site. The substrate site is built by histidine 328, aspartate 361, glutamate 415, and histidine 420. Aspartate 361 provides a ligand contact to Zn(2+). Histidine 420 contacts Zn(2+).

This sequence belongs to the histidinol dehydrogenase family. Requires Zn(2+) as cofactor.

The catalysed reaction is L-histidinol + 2 NAD(+) + H2O = L-histidine + 2 NADH + 3 H(+). It participates in amino-acid biosynthesis; L-histidine biosynthesis; L-histidine from 5-phospho-alpha-D-ribose 1-diphosphate: step 9/9. Functionally, catalyzes the sequential NAD-dependent oxidations of L-histidinol to L-histidinaldehyde and then to L-histidine. The chain is Histidinol dehydrogenase from Neisseria meningitidis serogroup B (strain ATCC BAA-335 / MC58).